Here is a 262-residue protein sequence, read N- to C-terminus: Succinate dehydrogenase [ubiquinone] iron-sulfur subunit (262 aa).

Residues 21–110 (KLIKIFRWDS…NNIIYVYPLP (90 aa)) form the 2Fe-2S ferredoxin-type domain. Residues Cys-73, Cys-78, Cys-81, and Cys-93 each contribute to the [2Fe-2S] cluster site. Positions 154-184 (DRLYLDGLYECILCACCSASCPSYWWNHDKY) constitute a 4Fe-4S ferredoxin-type domain. 3 residues coordinate [4Fe-4S] cluster: Cys-164, Cys-167, and Cys-170. Cys-174 serves as a coordination point for [3Fe-4S] cluster. Trp-179 provides a ligand contact to a ubiquinone. [3Fe-4S] cluster is bound by residues Cys-221 and Cys-227. Cys-231 serves as a coordination point for [4Fe-4S] cluster.

It belongs to the succinate dehydrogenase/fumarate reductase iron-sulfur protein family. In terms of assembly, component of complex II composed of four subunits: a flavoprotein (FP), an iron-sulfur protein (IP), and a cytochrome b composed of a large and a small subunit. It depends on [2Fe-2S] cluster as a cofactor. The cofactor is [3Fe-4S] cluster. [4Fe-4S] cluster serves as cofactor.

The protein resides in the mitochondrion inner membrane. The catalysed reaction is a quinone + succinate = fumarate + a quinol. It functions in the pathway carbohydrate metabolism; tricarboxylic acid cycle; fumarate from succinate (eukaryal route): step 1/1. Functionally, iron-sulfur protein (IP) subunit of succinate dehydrogenase (SDH) that is involved in complex II of the mitochondrial electron transport chain and is responsible for transferring electrons from succinate to ubiquinone (coenzyme Q). This chain is Succinate dehydrogenase [ubiquinone] iron-sulfur subunit (SDH2), found in Cyanidium caldarium (Red alga).